Consider the following 398-residue polypeptide: Probable RNA methyltransferase sce1580 (398 aa).

Positions 1-24 (MRVPEIPEETASPLRAGDPPAQVA) are disordered. E140 (proton acceptor) is an active-site residue. The region spanning 146–378 (GPARTTLCVS…TLVRRPRGRD (233 aa)) is the Radical SAM core domain. A disulfide bond links C153 and C383. Residues C160, C164, and C167 each contribute to the [4Fe-4S] cluster site. S-adenosyl-L-methionine is bound by residues 211–212 (GE), S243, 265–267 (SLN), and N340. The S-methylcysteine intermediate role is filled by C383.

Belongs to the radical SAM superfamily. RlmN family. Requires [4Fe-4S] cluster as cofactor.

It is found in the cytoplasm. The sequence is that of Probable RNA methyltransferase sce1580 from Sorangium cellulosum (strain So ce56) (Polyangium cellulosum (strain So ce56)).